We begin with the raw amino-acid sequence, 66 residues long: Large ribosomal subunit protein bL32 (66 aa).

Residues 1–18 (MAIVPKRKTSKQRKHKRR) are compositionally biased toward basic residues. The interval 1 to 21 (MAIVPKRKTSKQRKHKRRTND) is disordered.

The protein belongs to the bacterial ribosomal protein bL32 family.

The polypeptide is Large ribosomal subunit protein bL32 (Mycoplasmopsis agalactiae (strain NCTC 10123 / CIP 59.7 / PG2) (Mycoplasma agalactiae)).